A 312-amino-acid polypeptide reads, in one-letter code: Deoxyribonuclease Tat-D (312 aa).

A divalent metal cation-binding residues include E124, H161, H187, and D235.

It belongs to the metallo-dependent hydrolases superfamily. TatD-type hydrolase family. Requires a divalent metal cation as cofactor.

The protein resides in the cytoplasm. Its subcellular location is the nucleus. In terms of biological role, has both endo- and exonuclease activities. Incises double-stranded DNA without obvious specificity via its endonuclease activity and excises the DNA from the 3'-to 5'-end by its exonuclease activity. May have a role in apoptosis. The protein is Deoxyribonuclease Tat-D of Schizosaccharomyces pombe (strain 972 / ATCC 24843) (Fission yeast).